The chain runs to 500 residues: Probable cytosol aminopeptidase (500 aa).

The Mn(2+) site is built by lysine 265 and aspartate 270. The active site involves lysine 277. Residues aspartate 288, aspartate 347, and glutamate 349 each coordinate Mn(2+). Arginine 351 is a catalytic residue.

It belongs to the peptidase M17 family. Requires Mn(2+) as cofactor.

The protein localises to the cytoplasm. The catalysed reaction is Release of an N-terminal amino acid, Xaa-|-Yaa-, in which Xaa is preferably Leu, but may be other amino acids including Pro although not Arg or Lys, and Yaa may be Pro. Amino acid amides and methyl esters are also readily hydrolyzed, but rates on arylamides are exceedingly low.. The enzyme catalyses Release of an N-terminal amino acid, preferentially leucine, but not glutamic or aspartic acids.. Functionally, presumably involved in the processing and regular turnover of intracellular proteins. Catalyzes the removal of unsubstituted N-terminal amino acids from various peptides. The protein is Probable cytosol aminopeptidase of Bdellovibrio bacteriovorus (strain ATCC 15356 / DSM 50701 / NCIMB 9529 / HD100).